The sequence spans 291 residues: Proteasome subunit beta (291 aa).

Residues Met1–Gly57 constitute a propeptide, removed in mature form; by autocatalysis. The Nucleophile role is filled by Thr58.

Belongs to the peptidase T1B family. In terms of assembly, the 20S proteasome core is composed of 14 alpha and 14 beta subunits that assemble into four stacked heptameric rings, resulting in a barrel-shaped structure. The two inner rings, each composed of seven catalytic beta subunits, are sandwiched by two outer rings, each composed of seven alpha subunits. The catalytic chamber with the active sites is on the inside of the barrel. Has a gated structure, the ends of the cylinder being occluded by the N-termini of the alpha-subunits. Is capped by the proteasome-associated ATPase, ARC.

It is found in the cytoplasm. It catalyses the reaction Cleavage of peptide bonds with very broad specificity.. Its pathway is protein degradation; proteasomal Pup-dependent pathway. Its activity is regulated as follows. The formation of the proteasomal ATPase ARC-20S proteasome complex, likely via the docking of the C-termini of ARC into the intersubunit pockets in the alpha-rings, may trigger opening of the gate for substrate entry. Interconversion between the open-gate and close-gate conformations leads to a dynamic regulation of the 20S proteasome proteolysis activity. Component of the proteasome core, a large protease complex with broad specificity involved in protein degradation. In Mycobacterium tuberculosis (strain ATCC 25177 / H37Ra), this protein is Proteasome subunit beta.